Reading from the N-terminus, the 309-residue chain is Bombesin receptor-activated protein C6orf89 homolog (309 aa).

Residues 1-59 lie on the Cytoplasmic side of the membrane; sequence MGSSLSEPCIYDKLSESIDILRQSGYRYGMSEREIEKFIKQVLETNEPRREPPQFPILR. The chain crosses the membrane as a helical span at residues 60-80; sequence ATVKFVVAVGVVLMAVLVFTY. Residues 81–309 lie on the Extracellular side of the membrane; it reads PQSPVLMGSV…QDVQCDSAVL (229 aa).

As to quaternary structure, homodimer.

The protein localises to the golgi apparatus membrane. The protein resides in the cytoplasm. Functionally, exhibits histone deacetylase (HDAC) enhancer properties. May play a role in progression through the cell cycle. The sequence is that of Bombesin receptor-activated protein C6orf89 homolog from Danio rerio (Zebrafish).